The sequence spans 296 residues: tRNA dimethylallyltransferase (296 aa).

11–18 lines the ATP pocket; it reads GPTAVGKT. A substrate-binding site is contributed by 13–18; sequence TAVGKT. Residues 36–39 form an interaction with substrate tRNA region; it reads DSQQ.

It belongs to the IPP transferase family. Monomer. Mg(2+) is required as a cofactor.

It catalyses the reaction adenosine(37) in tRNA + dimethylallyl diphosphate = N(6)-dimethylallyladenosine(37) in tRNA + diphosphate. Functionally, catalyzes the transfer of a dimethylallyl group onto the adenine at position 37 in tRNAs that read codons beginning with uridine, leading to the formation of N6-(dimethylallyl)adenosine (i(6)A). The chain is tRNA dimethylallyltransferase from Streptococcus agalactiae serotype III (strain NEM316).